A 558-amino-acid polypeptide reads, in one-letter code: Formate--tetrahydrofolate ligase (558 aa).

67-74 (TPAGEGKT) contacts ATP.

This sequence belongs to the formate--tetrahydrofolate ligase family.

The catalysed reaction is (6S)-5,6,7,8-tetrahydrofolate + formate + ATP = (6R)-10-formyltetrahydrofolate + ADP + phosphate. It participates in one-carbon metabolism; tetrahydrofolate interconversion. This chain is Formate--tetrahydrofolate ligase, found in Ruegeria pomeroyi (strain ATCC 700808 / DSM 15171 / DSS-3) (Silicibacter pomeroyi).